The chain runs to 67 residues: Small, acid-soluble spore protein B (67 aa).

The protein belongs to the alpha/beta-type SASP family.

SASP are bound to spore DNA. They are double-stranded DNA-binding proteins that cause DNA to change to an a-like conformation. They protect the DNA backbone from chemical and enzymatic cleavage and are thus involved in dormant spore's high resistance to UV light. This is Small, acid-soluble spore protein B (sspB) from Bacillus subtilis (strain 168).